The following is a 154-amino-acid chain: UPF0756 membrane protein BLi03063/BL00400 (154 aa).

Transmembrane regions (helical) follow at residues 8–28 (FLIL…IIAV), 54–74 (WGVT…EIGF), 87–107 (WIAL…ITLL), and 117–137 (LVFG…GPLI).

The protein belongs to the UPF0756 family.

Its subcellular location is the cell membrane. The polypeptide is UPF0756 membrane protein BLi03063/BL00400 (Bacillus licheniformis (strain ATCC 14580 / DSM 13 / JCM 2505 / CCUG 7422 / NBRC 12200 / NCIMB 9375 / NCTC 10341 / NRRL NRS-1264 / Gibson 46)).